The sequence spans 137 residues: Probable Hsp20 family chaperone (137 aa).

Residues 25 to 137 form the sHSP domain; that stretch reads LTNNNNIMKT…PKEKHYIKLN (113 aa).

It belongs to the small heat shock protein (HSP20) family.

Probable chaperone. The chain is Probable Hsp20 family chaperone from Onion yellows phytoplasma (strain OY-M).